We begin with the raw amino-acid sequence, 210 residues long: MALELLTPFTKVELEEEKKESNRKQIGILGGNFNPIHNAHLVVADQVRQQLGLDQVLLMPECKPPHVDAKETIDEKHRLCMLELAIEDVEGLAIETCELERQGISYTYDTMIYLTEQHPDVDYYFIIGADMVDYLPKWHRIDELVKLVQFVGVQRPKYKAGTSYPVIWVDLPLMDISSSMIRDFIKKGRQPNYLLPKQVLDYITQEGLYQ.

Belongs to the NadD family.

It catalyses the reaction nicotinate beta-D-ribonucleotide + ATP + H(+) = deamido-NAD(+) + diphosphate. The protein operates within cofactor biosynthesis; NAD(+) biosynthesis; deamido-NAD(+) from nicotinate D-ribonucleotide: step 1/1. Its function is as follows. Catalyzes the reversible adenylation of nicotinate mononucleotide (NaMN) to nicotinic acid adenine dinucleotide (NaAD). The protein is Probable nicotinate-nucleotide adenylyltransferase of Streptococcus pyogenes serotype M18 (strain MGAS8232).